Reading from the N-terminus, the 320-residue chain is Ferrochelatase (320 aa).

Residues His-194 and Glu-275 each contribute to the Fe cation site.

The protein belongs to the ferrochelatase family. Monomer.

It localises to the cytoplasm. It catalyses the reaction heme b + 2 H(+) = protoporphyrin IX + Fe(2+). It participates in porphyrin-containing compound metabolism; protoheme biosynthesis; protoheme from protoporphyrin-IX: step 1/1. In terms of biological role, catalyzes the ferrous insertion into protoporphyrin IX. This chain is Ferrochelatase, found in Shigella boydii serotype 4 (strain Sb227).